Consider the following 151-residue polypeptide: Deoxyuridine 5'-triphosphate nucleotidohydrolase (151 aa).

Substrate is bound by residues 70–72 (RSG), asparagine 83, 87–89 (LID), and methionine 97.

This sequence belongs to the dUTPase family. The cofactor is Mg(2+).

The enzyme catalyses dUTP + H2O = dUMP + diphosphate + H(+). It participates in pyrimidine metabolism; dUMP biosynthesis; dUMP from dCTP (dUTP route): step 2/2. Functionally, this enzyme is involved in nucleotide metabolism: it produces dUMP, the immediate precursor of thymidine nucleotides and it decreases the intracellular concentration of dUTP so that uracil cannot be incorporated into DNA. The sequence is that of Deoxyuridine 5'-triphosphate nucleotidohydrolase from Sodalis glossinidius (strain morsitans).